A 493-amino-acid polypeptide reads, in one-letter code: MVPVVALVGRPNVGKSTLFNRLTRTRDALVADFPGLTRDRKYGHAHFSEHDFIVIDTGGIDGTEEGVETKMAEQSLAAIDEADVVLFMVDGRAGLTPSDVAIAKHLRQLEKPSMLVVNKVDGIDPDAASADFWQLGVEDMYQIAAAHGRGVTALIDLALNPFAEALKAENGEVSDLTEFEDEEEEQVDFTEEEAEEEFKRLQDQPIKLAIIGRPNVGKSTLTNRILGEERVVVYDMPGTTRDSIYIPMQRDEREYVLIDTAGVRRRKNINETVEKFSVVKTLKAIEDANVVLLLIDARENISDQDLSLLGFALNAGRSIVIAVNKWDGLDNDVKDRVKKELDRRLGFVDFARIHFISALHGTGVGHLFESVQEAYKSATTRVGTSVLTRIMKMATDDHQPPMVRGRRVKLKYAHAGGYNPPIIVIHGNQVRNLPDSYKRFLMNYYRRSLEIMGTPIRIQFQNSENPFEAKTNKLTISQERKRKRMMSMVKGRK.

EngA-type G domains are found at residues 3–166 (PVVA…AEAL) and 206–379 (IKLA…KSAT). Residues 9–16 (GRPNVGKS), 56–60 (DTGGI), 118–121 (NKVD), 212–219 (GRPNVGKS), 259–263 (DTAGV), and 324–327 (NKWD) contribute to the GTP site. Residues 380 to 464 (TRVGTSVLTR…PIRIQFQNSE (85 aa)) enclose the KH-like domain.

This sequence belongs to the TRAFAC class TrmE-Era-EngA-EngB-Septin-like GTPase superfamily. EngA (Der) GTPase family. Associates with the 50S ribosomal subunit.

GTPase that plays an essential role in the late steps of ribosome biogenesis. The protein is GTPase Der of Vibrio atlanticus (strain LGP32) (Vibrio splendidus (strain Mel32)).